The following is a 309-amino-acid chain: Olfactory receptor 5B2 (309 aa).

The Extracellular segment spans residues 1–23 (MENCTEVTKFILLGLTSVPELQI). An N-linked (GlcNAc...) asparagine glycan is attached at asparagine 3. Residues 24 to 47 (PLFILFTFIYLLTLCGNLGMMLLI) form a helical membrane-spanning segment. Topologically, residues 48–55 (LMDSCLHT) are cytoplasmic. The chain crosses the membrane as a helical span at residues 56–77 (PMYFFLSNLSLVDFGYSSAVTP). Residues 78–98 (KVMAGFLRGDKVISYNACAVQ) lie on the Extracellular side of the membrane. Cysteine 95 and cysteine 187 are disulfide-bonded. Residues 99-118 (MFFFVALATVENYLLASMAY) traverse the membrane as a helical segment. Over 119 to 137 (DRYAAVCKPLHYTTTMTAS) the chain is Cytoplasmic. The chain crosses the membrane as a helical span at residues 138–156 (VGACLALGSYVCGFLNASF). Over 157-193 (HIGGIFSLSFCKSNLVHHFFCDVPAVMALSCSDKHTS) the chain is Extracellular. Residues 194 to 217 (EVILVFMSSFNIFFVLLVIFISYL) form a helical membrane-spanning segment. At 218–234 (FIFITILKMHSAKGHQK) the chain is on the cytoplasmic side. The helical transmembrane segment at 235-257 (ALSTCASHFTAVSVFYGTVIFIY) threads the bilayer. The Extracellular portion of the chain corresponds to 258-270 (LQPSSSHSMDTDK). Residues 271–290 (MASVFYAMIIPMLNPVVYSL) traverse the membrane as a helical segment. Residues 291–309 (RNREVQNAFKKVLRRQKFL) lie on the Cytoplasmic side of the membrane.

The protein belongs to the G-protein coupled receptor 1 family.

It localises to the cell membrane. Functionally, odorant receptor. This Homo sapiens (Human) protein is Olfactory receptor 5B2 (OR5B2).